The following is a 391-amino-acid chain: Ferrochelatase (391 aa).

The Fe cation site is built by H196 and E281.

This sequence belongs to the ferrochelatase family.

Its subcellular location is the cytoplasm. It catalyses the reaction heme b + 2 H(+) = protoporphyrin IX + Fe(2+). Its pathway is porphyrin-containing compound metabolism; protoheme biosynthesis; protoheme from protoporphyrin-IX: step 1/1. Its function is as follows. Catalyzes the ferrous insertion into protoporphyrin IX. This chain is Ferrochelatase, found in Prochlorococcus marinus (strain MIT 9301).